Reading from the N-terminus, the 285-residue chain is Malonyl-[acyl-carrier protein] O-methyltransferase (285 aa).

Belongs to the methyltransferase superfamily.

It carries out the reaction malonyl-[ACP] + S-adenosyl-L-methionine = malonyl-[ACP] methyl ester + S-adenosyl-L-homocysteine. It participates in cofactor biosynthesis; biotin biosynthesis. Converts the free carboxyl group of a malonyl-thioester to its methyl ester by transfer of a methyl group from S-adenosyl-L-methionine (SAM). It allows to synthesize pimeloyl-ACP via the fatty acid synthetic pathway. The chain is Malonyl-[acyl-carrier protein] O-methyltransferase from Bacillus cytotoxicus (strain DSM 22905 / CIP 110041 / 391-98 / NVH 391-98).